We begin with the raw amino-acid sequence, 537 residues long: Phosphoenolpyruvate carboxykinase (ATP) (537 aa).

Substrate-binding residues include R61, Y195, and K201. Residues K201, H220, and 236-244 (GLSGTGKTT) contribute to the ATP site. 2 residues coordinate Mn(2+): K201 and H220. Residue D257 participates in Mn(2+) binding. ATP is bound at residue E285. A compositionally biased stretch (basic and acidic residues) spans 311 to 321 (PDFDNGSKTEN). The interval 311 to 342 (PDFDNGSKTENTRSAYPLESIPNASPTGRAGQ) is disordered. R323 contributes to the substrate binding site. The ATP site is built by R323 and T448.

Belongs to the phosphoenolpyruvate carboxykinase (ATP) family. Requires Mn(2+) as cofactor.

Its subcellular location is the cytoplasm. The enzyme catalyses oxaloacetate + ATP = phosphoenolpyruvate + ADP + CO2. The protein operates within carbohydrate biosynthesis; gluconeogenesis. Functionally, involved in the gluconeogenesis. Catalyzes the conversion of oxaloacetate (OAA) to phosphoenolpyruvate (PEP) through direct phosphoryl transfer between the nucleoside triphosphate and OAA. This is Phosphoenolpyruvate carboxykinase (ATP) from Rhodopseudomonas palustris (strain BisB5).